The sequence spans 471 residues: Tumor necrosis factor receptor superfamily member 1A (471 aa).

The N-terminal stretch at 1 to 29 (MGLPTVPGLLLPLVLPALLADVYPAGVQG) is a signal peptide. Residues 30-210 (LVPHPGDLEK…GKDSQDPGTT (181 aa)) are Extracellular-facing. TNFR-Cys repeat units lie at residues 43-82 (PCPQGKYNHPQNSTICCTKCHKGTYLYNDCPGPGRDTDCR), 83-125 (VCAP…DTVC), 126-166 (GCRK…DTIC), and 167-195 (HCHMGFFLKGAKCISCHDCKNKECEKLCP). 7 cysteine pairs are disulfide-bonded: C44–C58, C59–C72, C62–C81, C84–C99, C102–C117, C105–C125, and C127–C143. Residue N54 is glycosylated (N-linked (GlcNAc...) asparagine). N-linked (GlcNAc...) asparagine glycans are attached at residues N145 and N151. 5 disulfides stabilise this stretch: C146/C158, C149/C166, C168/C179, C182/C194, and C185/C190. A helical membrane pass occupies residues 211–233 (VLLPLVIVFGLCLASFASVVLAC). The Cytoplasmic segment spans residues 234 to 471 (RYQRWKPKLY…RLASEPRLLW (238 aa)). The N-SMase activation domain (NSD) stretch occupies residues 340–360 (TPGPPASTHLCTPVQKWEASA). In terms of domain architecture, Death spans 372–457 (PATLYAVVDG…GCLENIEEAL (86 aa)).

As to quaternary structure, binding of TNF to the extracellular domain leads to homotrimerization. The aggregated death domains provide a novel molecular interface that interacts specifically with the death domain of TRADD. Various TRADD-interacting proteins such as TRAFS, RIPK1 and possibly FADD, are recruited to the complex by their association with TRADD. This complex activates at least two distinct signaling cascades, apoptosis and NF-kappa-B signaling. Interacts with BAG4, BABAM2, FEM1B, GRB2, SQSTM1 and TRPC4AP. Interacts directly with NOL3 (via CARD domain); inhibits TNF-signaling pathway. Interacts with SH3RF2, TRADD and RIPK1. SH3RF2 facilitates the recruitment of RIPK1 and TRADD to TNFRSF1A in a TNF-alpha-dependent process. Interacts with PGLYRP1; this interaction is important for cell death induction. Interacts (via death domain) with MADD (via death domain).

The protein resides in the cell membrane. It is found in the golgi apparatus membrane. Functionally, receptor for TNFSF2/TNF-alpha and homotrimeric TNFSF1/lymphotoxin-alpha. The adapter molecule FADD recruits caspase-8 to the activated receptor. The resulting death-inducing signaling complex (DISC) performs caspase-8 proteolytic activation which initiates the subsequent cascade of caspases (aspartate-specific cysteine proteases) mediating apoptosis. The polypeptide is Tumor necrosis factor receptor superfamily member 1A (TNFRSF1A) (Bos taurus (Bovine)).